A 340-amino-acid polypeptide reads, in one-letter code: Mitochondrial distribution and morphology protein 12 (340 aa).

The SMP-LTD domain maps to 1–321 (MSIDLDWDGM…WPSWIKVSME (321 aa)). Disordered regions lie at residues 79–107 (HYLP…TNPI), 161–184 (SVRE…EDRE), and 319–340 (SMED…EDEH). The segment covering 89-106 (QRRSAPSTPHIHTNTTNP) has biased composition (polar residues). Over residues 321-340 (EDEDSDDEEGEEEGDQEDEH) the composition is skewed to acidic residues.

It belongs to the MDM12 family. As to quaternary structure, component of the ER-mitochondria encounter structure (ERMES) or MDM complex, composed of MMM1, MDM10, MDM12 and MDM34. An MMM1 homodimer associates with one molecule of MDM12 on each side in a pairwise head-to-tail manner, and the SMP-LTD domains of MMM1 and MDM12 generate a continuous hydrophobic tunnel for phospholipid trafficking.

It is found in the mitochondrion outer membrane. The protein localises to the endoplasmic reticulum membrane. Functionally, component of the ERMES/MDM complex, which serves as a molecular tether to connect the endoplasmic reticulum (ER) and mitochondria. Components of this complex are involved in the control of mitochondrial shape and protein biogenesis, and function in nonvesicular lipid trafficking between the ER and mitochondria. MDM12 is required for the interaction of the ER-resident membrane protein MMM1 and the outer mitochondrial membrane-resident beta-barrel protein MDM10. The MDM12-MMM1 subcomplex functions in the major beta-barrel assembly pathway that is responsible for biogenesis of all mitochondrial outer membrane beta-barrel proteins, and acts in a late step after the SAM complex. The MDM10-MDM12-MMM1 subcomplex further acts in the TOM40-specific pathway after the action of the MDM12-MMM1 complex. Essential for establishing and maintaining the structure of mitochondria and maintenance of mtDNA nucleoids. The sequence is that of Mitochondrial distribution and morphology protein 12 from Yarrowia lipolytica (strain CLIB 122 / E 150) (Yeast).